A 792-amino-acid polypeptide reads, in one-letter code: Probable phosphoketolase (792 aa).

Belongs to the XFP family. Requires thiamine diphosphate as cofactor.

The chain is Probable phosphoketolase from Brucella melitensis biotype 1 (strain ATCC 23456 / CCUG 17765 / NCTC 10094 / 16M).